Consider the following 364-residue polypeptide: UDP-N-acetylglucosamine--N-acetylmuramyl-(pentapeptide) pyrophosphoryl-undecaprenol N-acetylglucosamine transferase 1 (364 aa).

Residues 10–12 (TGG), asparagine 124, serine 195, isoleucine 250, and glutamine 295 contribute to the UDP-N-acetyl-alpha-D-glucosamine site.

The protein belongs to the glycosyltransferase 28 family. MurG subfamily.

The protein localises to the cell membrane. It catalyses the reaction di-trans,octa-cis-undecaprenyl diphospho-N-acetyl-alpha-D-muramoyl-L-alanyl-D-glutamyl-meso-2,6-diaminopimeloyl-D-alanyl-D-alanine + UDP-N-acetyl-alpha-D-glucosamine = di-trans,octa-cis-undecaprenyl diphospho-[N-acetyl-alpha-D-glucosaminyl-(1-&gt;4)]-N-acetyl-alpha-D-muramoyl-L-alanyl-D-glutamyl-meso-2,6-diaminopimeloyl-D-alanyl-D-alanine + UDP + H(+). The protein operates within cell wall biogenesis; peptidoglycan biosynthesis. Cell wall formation. Catalyzes the transfer of a GlcNAc subunit on undecaprenyl-pyrophosphoryl-MurNAc-pentapeptide (lipid intermediate I) to form undecaprenyl-pyrophosphoryl-MurNAc-(pentapeptide)GlcNAc (lipid intermediate II). This is UDP-N-acetylglucosamine--N-acetylmuramyl-(pentapeptide) pyrophosphoryl-undecaprenol N-acetylglucosamine transferase 1 from Bacillus thuringiensis subsp. konkukian (strain 97-27).